Reading from the N-terminus, the 2029-residue chain is MGLQMTAARPIAALSLLVLSLLTWTHPTIVDAAHPPEIIRKPQNQGVRVGGVASFYCAARGDPPPSIVWRKNGKKVSGTQSRYTVLEQPGGISILRIEPVRAGRDDAPYECVAENGVGDAVSADATLTIYEGDKTPAGFPVITQGPGTRVIEVGHTVLMTCKAIGNPTPNIYWIKNQTKVDMSNPRYSLKDGFLQIENSREEDQGKYECVAENSMGTEHSKATNLYVKVRRVPPTFSRPPETISEVMLGSNLNLSCIAVGSPMPHVKWMKGSEDLTPENEMPIGRNVLQLINIQESANYTCIAASTLGQIDSVSVVKVQSLPTAPTDVQISEVTATSVRLEWSYKGPEDLQYYVIQYKPKNANQAFSEISGIITMYYVVRALSPYTEYEFYVIAVNNIGRGPPSAPATCTTGETKMESAPRNVQVRTLSSSTMVITWEPPETPNGQVTGYKVYYTTNSNQPEASWNSQMVDNSELTTVSELTPHAIYTVRVQAYTSMGAGPMSTPVQVKAQQGVPSQPSNFRATDIGETAVTLQWTKPTHSSENIVHYELYWNDTYANQAHHKRISNSEAYTLDGLYPDTLYYIWLAARSQRGEGATTPPIPVRTKQYVPGAPPRNITAIATSSTTISLSWLPPPVERSNGRIIYYKVFFVEVGREDDEATTMTLNMTSIVLDELKRWTEYKIWVLAGTSVGDGPRSHPIILRTQEDVPGDPQDVKATPLNSTSIHVSWKPPLEKDRNGIIRGYHIHAQELRDEGKGFLNEPFKFDVVDTLEFNVTGLQPDTKYSIQVAALTRKGDGDRSAAIVVKTPGGVPVRPTVSLKIMEREPIVSIELEWERPAQTYGELRGYRLRWGVKDQALKEEMLSGPQMTKKRFDNLERGVEYEFRVAGSNHIGIGQETVKIFQTPEGTPGGPPSNITIRFQTPDVLCVTWDPPTREHRNGIITRYDVQFHKKIDHGLGSERNMTLRKAVFTNLEENTEYIFRVRAYTKQGAGPFSDKLIVETERDMGRAPMSLQAEATSEQTAEIWWEPVTSRGKLLGYKIFYTMTAVEDLDDWQTKTVGLTESADLVNLEKFAQYAVAIAARFKNGLGRLSEKVTVRIKPEDVPLNLRAHDVSTHSMTLSWSPPIRLTPVNYKISFDAMKVFVDSQGFSQTQIVPKREIILKHYVKTHTINELSPFTTYNVNVSAIPSDYSYRPPTKITVTTQMAAPQPMVKPDFYGVVNGEEILVILPQASEEYGPISHYYLVVVPEDKSNLHKIPDQFLTDDLLPGRNKPERPNAPYIAAKFPQRSIPFTFHLGSGDDYHNFTNRKLEREKRYRIFVRAVVDTPQKHLYTSSPFSEFLSLDMREAPPGERPHRPDPNWPAEPEVSVNRNKDEPEILWVVLPLMVSTFIVSTALIVLCVVKRRRQPCKTPDQAAVTRPLMAADLGAGPTPSDPVDMRRLNFQTPGMISHPPIPISEFANHIERLKSNDNQKFSQEYESIEPGQQFTWDNSNLEHNKSKNRYANVTAYDHSRVQLPAVEGVVGSDYINANYCDGYRKHNAYVATQGPLQETFVDFWRMCWELKTATIVMMTRLEERTRIKCDQYWPTRGTETYGQIFVTITETQELATYSIRTFQLCRQGFNDRREIKQLQFTAWPDHGVPDHPAPFLQFLRRCRALTPPESGPVIVHCSAGVGRTGCYIVIDSMLERMKHEKIIDIYGHVTCLRAQRNYMVQTEDQYIFIHDAILEAIICGVTEVPARNLHTHLQKLLITEPGETISGMEVEFKKLSNVKMDSSKFVTANLPCNKHKNRLVHILPYESSRVYLTPIHGIEGSDYVNASFIDGYRYRSAYIAAQGPVQDAAEDFWRMLWEHNSTIVVMLTKLKEMGREKCFQYWPHERSVRYQYYVVDPIAEYNMPQYKLREFKVTDARDGSSRTVRQFQFIDWPEQGVPKSGEGFIDFIGQVHKTKEQFGQDGPITVHCSAGVGRSGVFITLSIVLERMQYEGVLDVFQTVRILRSQRPAMVQTEDQYHFCYRAALEYLGSFDNYTN.

The N-terminal stretch at 1-32 (MGLQMTAARPIAALSLLVLSLLTWTHPTIVDA) is a signal peptide. Over 33–1377 (AHPPEIIRKP…SVNRNKDEPE (1345 aa)) the chain is Extracellular. 3 Ig-like C2-type domains span residues 36–128 (PEII…ATLT), 140–224 (PVIT…KATN), and 234–316 (PTFS…VSVV). Intrachain disulfides connect Cys-57-Cys-111 and Cys-161-Cys-209. 70–82 (RKNGKKVSGTQSR) is a heparin binding site. 3 N-linked (GlcNAc...) asparagine glycosylation sites follow: Asn-176, Asn-253, and Asn-298. Cysteines 256 and 301 form a disulfide. Fibronectin type-III domains follow at residues 324 to 414 (APTD…TGET), 419 to 513 (APRN…AQQG), 517 to 608 (QPSN…TKQY), 613 to 707 (PPRN…TQED), 711 to 810 (DPQD…TPGG), 815 to 911 (PTVS…TPGG), 912 to 1005 (PPSN…TERD), 1009 to 1102 (APMS…IKPE), and 1104 to 1206 (VPLN…TQMA). N-linked (GlcNAc...) asparagine glycosylation is found at Asn-553, Asn-616, Asn-666, Asn-721, and Asn-774. Residues Asn-915 and Asn-962 are each glycosylated (N-linked (GlcNAc...) asparagine). N-linked (GlcNAc...) asparagine glycans are attached at residues Asn-1183 and Asn-1304. Residues 1346-1358 (REAPPGERPHRPD) show a composition bias toward basic and acidic residues. The disordered stretch occupies residues 1346 to 1369 (REAPPGERPHRPDPNWPAEPEVSV). The chain crosses the membrane as a helical span at residues 1378–1402 (ILWVVLPLMVSTFIVSTALIVLCVV). Residues 1403-2029 (KRRRQPCKTP…YLGSFDNYTN (627 aa)) lie on the Cytoplasmic side of the membrane. 2 Tyrosine-protein phosphatase domains span residues 1474–1729 (FSQE…ILEA) and 1761–2020 (MEVE…ALEY). Phosphothreonine is present on Thr-1572. Residues Asp-1638, 1670-1676 (CSAGVGR), and Gln-1714 contribute to the substrate site. Cys-1670 functions as the Phosphocysteine intermediate in the catalytic mechanism. Cys-1961 (phosphocysteine intermediate) is an active-site residue.

It belongs to the protein-tyrosine phosphatase family. Receptor class 2A subfamily. As to expression, selectively expressed in a subset of axons and pioneer neurons in the embryo.

The protein localises to the membrane. The catalysed reaction is O-phospho-L-tyrosyl-[protein] + H2O = L-tyrosyl-[protein] + phosphate. In terms of biological role, possible cell adhesion receptor. It possesses an intrinsic protein tyrosine phosphatase activity (PTPase). It controls motor axon guidance. In the developing eye, has a role in normal axonal targeting of the R7 photoreceptor, where it negatively regulates bdl. Inhibits bdl cell adhesion activity in vitro; this effect is independent of its PTPase function. This chain is Tyrosine-protein phosphatase Lar (Lar), found in Drosophila melanogaster (Fruit fly).